The sequence spans 493 residues: MTIATPLKAQPKASHFIDGDYVEDNTGTPFESIFPATGEMIAKLHAATPAIVERAIASAKRAQKEWAAMSPMARGRILKRAADIMRERNDALSTLETLDTGKPIQETIVADPTSGADAFEFFGGIAPSALNGDYIPLGGDFAYTKRVPLGVCVGIGAWNYPQQIACWKAAPALVAGNAMVFKPSENTPLGALKIAEILIEAGLPKGLFNVIQGDRDTGPLLVNHPDVAKVSLTGSVPTGRKVAAAAAGHLKHVTMELGGKSPMIVFDDADIESAVGGAMLGNFYSSGQVCSNGTRVFVQKKAKARFLENLKRRTEAMILGDPLDYATHLGPLVSKAQQEKVLSYIEKGKAEGATLITGGGIPNNVAGEGAYVQPTVFADVTDDMTIAREEIFGPVMCVLDFDDEDEVLARANATEFGLAGGVFTADLARAHRVVDGLEAGTLWINTYNLCPVEIPFGGSKQSGFGRENSAAALEHYSELKTVYVSTGKVDAPY.

3 residues coordinate K(+): Ser-32, Ile-33, and Asp-99. Residue 156–158 coordinates NAD(+); the sequence is GAW. Catalysis depends on Lys-168, which acts as the Charge relay system. Residues 182 to 185 and 235 to 238 each bind NAD(+); these read KPSE and SVPT. Residue Leu-250 coordinates K(+). Glu-256 acts as the Proton acceptor in catalysis. Positions 258, 290, and 390 each coordinate NAD(+). The Nucleophile role is filled by Cys-290. Cys-290 carries the cysteine sulfenic acid (-SOH) modification. K(+) contacts are provided by Lys-460 and Gly-463. Residue Glu-467 is the Charge relay system of the active site.

It belongs to the aldehyde dehydrogenase family. In terms of assembly, dimer of dimers. K(+) serves as cofactor.

The catalysed reaction is betaine aldehyde + NAD(+) + H2O = glycine betaine + NADH + 2 H(+). Its pathway is amine and polyamine biosynthesis; betaine biosynthesis via choline pathway; betaine from betaine aldehyde: step 1/1. Involved in the biosynthesis of the osmoprotectant glycine betaine. Catalyzes the irreversible oxidation of betaine aldehyde to the corresponding acid. The protein is Betaine aldehyde dehydrogenase of Agrobacterium fabrum (strain C58 / ATCC 33970) (Agrobacterium tumefaciens (strain C58)).